The sequence spans 502 residues: Cytochrome P450 71B19 (502 aa).

Residues 1-21 (MAISFLCVFLITFVSLIFFAK) traverse the membrane as a helical segment. C444 is a binding site for heme.

This sequence belongs to the cytochrome P450 family. Heme serves as cofactor.

It localises to the membrane. The protein is Cytochrome P450 71B19 (CYP71B19) of Arabidopsis thaliana (Mouse-ear cress).